The following is a 594-amino-acid chain: UvrABC system protein C (594 aa).

In terms of domain architecture, GIY-YIG spans Asp14 to Ile91. The 36-residue stretch at Lys196–Ile231 folds into the UVR domain.

This sequence belongs to the UvrC family. In terms of assembly, interacts with UvrB in an incision complex.

The protein localises to the cytoplasm. In terms of biological role, the UvrABC repair system catalyzes the recognition and processing of DNA lesions. UvrC both incises the 5' and 3' sides of the lesion. The N-terminal half is responsible for the 3' incision and the C-terminal half is responsible for the 5' incision. This Bacillus cereus (strain Q1) protein is UvrABC system protein C.